The sequence spans 306 residues: Porphobilinogen deaminase (306 aa).

An S-(dipyrrolylmethanemethyl)cysteine modification is found at Cys237.

This sequence belongs to the HMBS family. In terms of assembly, monomer. Requires dipyrromethane as cofactor.

It carries out the reaction 4 porphobilinogen + H2O = hydroxymethylbilane + 4 NH4(+). The protein operates within porphyrin-containing compound metabolism; protoporphyrin-IX biosynthesis; coproporphyrinogen-III from 5-aminolevulinate: step 2/4. Its function is as follows. Tetrapolymerization of the monopyrrole PBG into the hydroxymethylbilane pre-uroporphyrinogen in several discrete steps. This chain is Porphobilinogen deaminase, found in Syntrophus aciditrophicus (strain SB).